A 51-amino-acid polypeptide reads, in one-letter code: Ribosome biogenesis protein Nop10 (51 aa).

It belongs to the NOP10 family.

Functionally, involved in ribosome biogenesis; more specifically in 18S rRNA pseudouridylation and in cleavage of pre-rRNA. The sequence is that of Ribosome biogenesis protein Nop10 from Nitrosopumilus maritimus (strain SCM1).